The primary structure comprises 877 residues: Probable Ras GTPase-activating-like protein ngap (877 aa).

In terms of domain architecture, C2 spans 72-218; that stretch reads TPSATYESLI…KDQKERELWF (147 aa). Positions 350-456 are disordered; it reads SDDGDISGLK…ETINLSSSIN (107 aa). Positions 389 to 409 are enriched in low complexity; sequence TTATTTPSSTPSTPISPSSQS. The segment covering 410-425 has biased composition (polar residues); sequence NNIKTPDSKTRSSSNA. Composition is skewed to low complexity over residues 426-438 and 447-456; these read STNT…KSTG and ETINLSSSIN. The Ras-GAP domain occupies 591–802; it reads GKCLYLLKSL…ENMKSFINTL (212 aa). Positions 820–848 form a coiled coil; the sequence is LEKELACLYRHLIKQRQDMAEEMESTESE.

May function as a Ras GTPase-activating protein. The chain is Probable Ras GTPase-activating-like protein ngap (ngap) from Dictyostelium discoideum (Social amoeba).